The primary structure comprises 590 residues: MRTHYADKVDSSLIDQTITLCGWVHRRRDHGGLIFIDLRDREGLVQVVCNPTESTVFKVAESLRNEYVIKVTGKVHKRPEGTVNPHIPSGEVEIAASDITLLNKSKPLPFNIDEYQEVSEEVRLKFRYLDLRRPEVAQRLKMRSYIIREIRRFLDERGFLDIETPMLTKSTPEGARDYLVPSRTHPGQFFALPQSPQIFKEILMVAGFDRYYQIVRCFRDEDLRADRQPEFTQLDLEMSFVEEKDIQQLMETMIRHLFSTFLNVPLPDPFPRITYDEAIKTYGTDRPDLRNPLTLVDVTDLMKSVEFKVFKEPANNPHGRIAVLRLPKGAELSRKAIDDYTQFVGIYGAKGLAYIKVENIDNGTGGLHSPILKFLPENVIAEILKRTQAQSGDILFFGADKAKIVNESLGALRDRLCADLNLYEGQWKPVWVVDFPMFDREDVGDWQALHHPFTALQETDPEKVIANPGDVLSRAYDIVLNGSEIGGGSIRINDIGMQYAVLKVLGISKEMAEAQFGHLLMALQFGSPPLGGIAFGLDRLVAIMTGASSIRDVIAFPKTQTAQCPLTNAPAQVETLQLETLGLKVSKHRK.

Residue Glu173 participates in L-aspartate binding. Residues 197 to 200 (QIFK) form an aspartate region. Arg219 is a binding site for L-aspartate. ATP contacts are provided by residues 219 to 221 (RDE) and Gln228. Residue His450 participates in L-aspartate binding. Position 484 (Glu484) interacts with ATP. An L-aspartate-binding site is contributed by Arg491. 536 to 539 (GLDR) provides a ligand contact to ATP.

It belongs to the class-II aminoacyl-tRNA synthetase family. Type 1 subfamily. As to quaternary structure, homodimer.

The protein resides in the cytoplasm. It carries out the reaction tRNA(Asx) + L-aspartate + ATP = L-aspartyl-tRNA(Asx) + AMP + diphosphate. Aspartyl-tRNA synthetase with relaxed tRNA specificity since it is able to aspartylate not only its cognate tRNA(Asp) but also tRNA(Asn). Reaction proceeds in two steps: L-aspartate is first activated by ATP to form Asp-AMP and then transferred to the acceptor end of tRNA(Asp/Asn). This is Aspartate--tRNA(Asp/Asn) ligase from Coxiella burnetii (strain Dugway 5J108-111).